Here is an 832-residue protein sequence, read N- to C-terminus: Putative pentatricopeptide repeat-containing protein At5g08310, mitochondrial (832 aa).

The N-terminal 27 residues, 1-27 (MAFSRIALLCQRFSRQQQQRQLLHRPL), are a transit peptide targeting the mitochondrion. PPR repeat units lie at residues 105–139 (DMYA…RCFM), 140–174 (SPGA…GLCV), 176–212 (NAYT…GFHF), 213–247 (DKFT…GWLD), 252–281 (TILV…DIRL), 282–316 (NYKT…GMNA), 317–351 (DIAL…GIPP), 352–383 (DRGI…IDKK), 385–415 (VMLL…LMGN), 438–472 (DSDS…GLIP), 473–507 (GPMM…GVEP), 508–542 (SQFT…GFEP), 543–577 (WIKH…GFLG), 578–612 (HMVA…GHCP), 613–647 (DVIA…GLKP), 648–682 (TVAT…EKNP), 683–717 (DVIT…DCYP), 718–752 (NRIT…EMEP), and 753–787 (DSAV…GRFP).

This sequence belongs to the PPR family. P subfamily.

The protein resides in the mitochondrion. This is Putative pentatricopeptide repeat-containing protein At5g08310, mitochondrial from Arabidopsis thaliana (Mouse-ear cress).